Consider the following 145-residue polypeptide: Large ribosomal subunit protein bL9 (145 aa).

This sequence belongs to the bacterial ribosomal protein bL9 family.

In terms of biological role, binds to the 23S rRNA. This chain is Large ribosomal subunit protein bL9, found in Mesomycoplasma hyopneumoniae (strain 232) (Mycoplasma hyopneumoniae).